The following is a 230-amino-acid chain: Endonuclease NucS (230 aa).

This sequence belongs to the NucS endonuclease family.

It localises to the cytoplasm. Functionally, cleaves both 3' and 5' ssDNA extremities of branched DNA structures. The polypeptide is Endonuclease NucS (Corynebacterium glutamicum (strain ATCC 13032 / DSM 20300 / JCM 1318 / BCRC 11384 / CCUG 27702 / LMG 3730 / NBRC 12168 / NCIMB 10025 / NRRL B-2784 / 534)).